Here is a 129-residue protein sequence, read N- to C-terminus: Succinate dehydrogenase assembly factor 3, mitochondrial (129 aa).

It belongs to the complex I LYR family. SDHAF3 subfamily. As to quaternary structure, interacts with the iron-sulfur protein subunit within the SDH catalytic dimer.

Its subcellular location is the mitochondrion matrix. Plays an essential role in the assembly of succinate dehydrogenase (SDH), an enzyme complex (also referred to as respiratory complex II) that is a component of both the tricarboxylic acid (TCA) cycle and the mitochondrial electron transport chain, and which couples the oxidation of succinate to fumarate with the reduction of ubiquinone (coenzyme Q) to ubiquinol. Promotes maturation of the iron-sulfur protein subunit of the SDH catalytic dimer, protecting it from the deleterious effects of oxidants. May act together with SDHAF1. This is Succinate dehydrogenase assembly factor 3, mitochondrial from Aspergillus fumigatus (strain ATCC MYA-4609 / CBS 101355 / FGSC A1100 / Af293) (Neosartorya fumigata).